The primary structure comprises 1141 residues: Myosin-binding protein C, fast-type (1141 aa).

Residues 1–62 (MPEAKPAAKK…VFLKKPDSVS (62 aa)) form a disordered region. Basic and acidic residues predominate over residues 13–39 (KGKDAPKGAPKEAPPKEAPAEAPKEAP). Ig-like C2-type domains lie at 50–153 (PTGV…NIDV), 255–344 (SAAF…VKEP), 345–437 (PVLI…VEEK), 438–538 (QLEV…KQEP), and 539–638 (PKIH…VVDV). Fibronectin type-III domains follow at residues 641-737 (PPEA…IAPT) and 739-834 (EPLH…IREI). The 95-residue stretch at 838–932 (PKIRLPRHLR…ATIRIRVVEK (95 aa)) folds into the Ig-like C2-type 6 domain. In terms of domain architecture, Fibronectin type-III 3 spans 935-1030 (PPINVMVKEV…SKNTARILKT (96 aa)). One can recognise an Ig-like C2-type 7 domain in the interval 1048–1141 (PKFLTPLIDR…ECKLEVRVPQ (94 aa)).

The protein belongs to the immunoglobulin superfamily. MyBP family.

Functionally, thick filament-associated protein located in the crossbridge region of vertebrate striated muscle a bands. In vitro it binds MHC, F-actin and native thin filaments, and modifies the activity of actin-activated myosin ATPase. It may modulate muscle contraction or may play a more structural role. This chain is Myosin-binding protein C, fast-type (MYBPC2), found in Homo sapiens (Human).